The following is a 395-amino-acid chain: Multidrug resistance protein MdtL (395 aa).

The Cytoplasmic segment spans residues 1–3; it reads MKR. A helical membrane pass occupies residues 4–24; the sequence is FLLCSFALVLLYPAGIDMYLV. Residues 25–41 are Periplasmic-facing; it reads GLPRIAADLNASEAQLH. The chain crosses the membrane as a helical span at residues 42–62; sequence IAFSVYLAGMATAMLFAGKIA. Residues 63 to 68 lie on the Cytoplasmic side of the membrane; sequence DQSGRK. Residues 69-89 form a helical membrane-spanning segment; that stretch reads PVAIVGALVFMMASLLCSRAS. At 90–92 the chain is on the periplasmic side; it reads EGS. The chain crosses the membrane as a helical span at residues 93-113; that stretch reads LFLSGRFLQGVGAGGCYVVAF. The Cytoplasmic segment spans residues 114–130; it reads AILRDTLDEHRRAKVLS. Residues 131 to 151 traverse the membrane as a helical segment; that stretch reads LLNGITCIVPVLAPVVGHLIM. Over 152 to 157 the chain is Periplasmic; that stretch reads LRFPWQ. Residues 158–178 traverse the membrane as a helical segment; it reads SLFYTMSAMGIIVGLLSLFIL. Over 179–216 the chain is Cytoplasmic; sequence RETRPVRLAPRDLSRSSPAAESLINRFFVSRLAITTLS. The helical transmembrane segment at 217 to 237 threads the bilayer; that stretch reads VSVILTFVNASPVLLMEVMGF. Over 238-246 the chain is Periplasmic; it reads SRGDYAITM. Residues 247–267 traverse the membrane as a helical segment; the sequence is ALTAGVSMVVSFSTPFALGLF. The Cytoplasmic portion of the chain corresponds to 268 to 270; the sequence is KPR. A helical membrane pass occupies residues 271–291; that stretch reads TLMLVSQGLFLTAGVTLSLAH. At 292–294 the chain is on the periplasmic side; sequence TNT. A helical membrane pass occupies residues 295-315; sequence VTLFGLTLICAGFSVGFGVAM. Residues 316–327 are Cytoplasmic-facing; it reads SQALGPFSLRAG. The chain crosses the membrane as a helical span at residues 328–350; that stretch reads VASSTLGIAQVCGSSLWIWLAAI. Topologically, residues 351-354 are periplasmic; it reads LGIS. A helical membrane pass occupies residues 355 to 377; that stretch reads AMNMLIGILIGCSIVSILLIFSV. The Cytoplasmic segment spans residues 378 to 395; it reads TPNRSVAEHEEIPYQSRP.

The protein belongs to the major facilitator superfamily. DHA1 family. MdtL (TC 2.A.1.2.22) subfamily.

It is found in the cell inner membrane. The polypeptide is Multidrug resistance protein MdtL (mdtL) (Salmonella typhimurium (strain LT2 / SGSC1412 / ATCC 700720)).